Here is a 252-residue protein sequence, read N- to C-terminus: Small ribosomal subunit protein uS2 (252 aa).

This sequence belongs to the universal ribosomal protein uS2 family.

The sequence is that of Small ribosomal subunit protein uS2 from Alcanivorax borkumensis (strain ATCC 700651 / DSM 11573 / NCIMB 13689 / SK2).